The sequence spans 399 residues: Tryptophan synthase beta chain (399 aa).

Lys92 is modified (N6-(pyridoxal phosphate)lysine).

This sequence belongs to the TrpB family. As to quaternary structure, tetramer of two alpha and two beta chains. Pyridoxal 5'-phosphate serves as cofactor.

The catalysed reaction is (1S,2R)-1-C-(indol-3-yl)glycerol 3-phosphate + L-serine = D-glyceraldehyde 3-phosphate + L-tryptophan + H2O. It participates in amino-acid biosynthesis; L-tryptophan biosynthesis; L-tryptophan from chorismate: step 5/5. Its function is as follows. The beta subunit is responsible for the synthesis of L-tryptophan from indole and L-serine. In Bordetella bronchiseptica (strain ATCC BAA-588 / NCTC 13252 / RB50) (Alcaligenes bronchisepticus), this protein is Tryptophan synthase beta chain.